The primary structure comprises 626 residues: Chaperone protein HtpG (626 aa).

Residues 1 to 341 (MIKKEFKAES…SEDLSLNISR (341 aa)) form an a; substrate-binding region. The interval 342–552 (EMLQHDRQLK…DGDVTIEMEK (211 aa)) is b. The interval 553 to 626 (ILSAMPNNQE…FTNDICKLMS (74 aa)) is c.

Belongs to the heat shock protein 90 family. Homodimer.

The protein resides in the cytoplasm. In terms of biological role, molecular chaperone. Has ATPase activity. The protein is Chaperone protein HtpG of Alkaliphilus metalliredigens (strain QYMF).